The primary structure comprises 363 residues: tRNA/tmRNA (uracil-C(5))-methyltransferase (363 aa).

S-adenosyl-L-methionine is bound by residues Gln187, Tyr215, Asn220, Glu236, and Asp296. The active-site Nucleophile is Cys321. The active-site Proton acceptor is the Glu355.

This sequence belongs to the class I-like SAM-binding methyltransferase superfamily. RNA M5U methyltransferase family. TrmA subfamily.

It catalyses the reaction uridine(54) in tRNA + S-adenosyl-L-methionine = 5-methyluridine(54) in tRNA + S-adenosyl-L-homocysteine + H(+). The enzyme catalyses uridine(341) in tmRNA + S-adenosyl-L-methionine = 5-methyluridine(341) in tmRNA + S-adenosyl-L-homocysteine + H(+). Its function is as follows. Dual-specificity methyltransferase that catalyzes the formation of 5-methyluridine at position 54 (m5U54) in all tRNAs, and that of position 341 (m5U341) in tmRNA (transfer-mRNA). The polypeptide is tRNA/tmRNA (uracil-C(5))-methyltransferase (Pseudomonas aeruginosa (strain ATCC 15692 / DSM 22644 / CIP 104116 / JCM 14847 / LMG 12228 / 1C / PRS 101 / PAO1)).